The chain runs to 231 residues: Chromosome partition protein MukE (231 aa).

The tract at residues serine 211 to alanine 231 is disordered. Residues alanine 214 to alanine 231 are compositionally biased toward acidic residues.

It belongs to the MukE family. Interacts, and probably forms a ternary complex, with MukF and MukB. The complex formation is stimulated by calcium or magnesium.

It localises to the cytoplasm. Its subcellular location is the nucleoid. In terms of biological role, involved in chromosome condensation, segregation and cell cycle progression. May participate in facilitating chromosome segregation by condensation DNA from both sides of a centrally located replisome during cell division. Probably acts via its interaction with MukB and MukF. This is Chromosome partition protein MukE from Vibrio vulnificus (strain CMCP6).